Here is a 160-residue protein sequence, read N- to C-terminus: 2-C-methyl-D-erythritol 2,4-cyclodiphosphate synthase (160 aa).

Asp-11 and His-13 together coordinate a divalent metal cation. 4-CDP-2-C-methyl-D-erythritol 2-phosphate is bound by residues 11–13 (DVH) and 37–38 (HS). Position 45 (His-45) interacts with a divalent metal cation. 4-CDP-2-C-methyl-D-erythritol 2-phosphate is bound by residues 59–61 (DIG), 64–68 (FPDTD), 135–138 (TTTE), Phe-142, and Arg-145.

The protein belongs to the IspF family. Homotrimer. The cofactor is a divalent metal cation.

The catalysed reaction is 4-CDP-2-C-methyl-D-erythritol 2-phosphate = 2-C-methyl-D-erythritol 2,4-cyclic diphosphate + CMP. It participates in isoprenoid biosynthesis; isopentenyl diphosphate biosynthesis via DXP pathway; isopentenyl diphosphate from 1-deoxy-D-xylulose 5-phosphate: step 4/6. Functionally, involved in the biosynthesis of isopentenyl diphosphate (IPP) and dimethylallyl diphosphate (DMAPP), two major building blocks of isoprenoid compounds. Catalyzes the conversion of 4-diphosphocytidyl-2-C-methyl-D-erythritol 2-phosphate (CDP-ME2P) to 2-C-methyl-D-erythritol 2,4-cyclodiphosphate (ME-CPP) with a corresponding release of cytidine 5-monophosphate (CMP). The polypeptide is 2-C-methyl-D-erythritol 2,4-cyclodiphosphate synthase (Alcanivorax borkumensis (strain ATCC 700651 / DSM 11573 / NCIMB 13689 / SK2)).